We begin with the raw amino-acid sequence, 240 residues long: 6-carboxyhexanoate--CoA ligase (240 aa).

Belongs to the BioW family. Homodimer. Requires Mg(2+) as cofactor.

The enzyme catalyses heptanedioate + ATP + CoA = 6-carboxyhexanoyl-CoA + AMP + diphosphate. It functions in the pathway metabolic intermediate metabolism; pimeloyl-CoA biosynthesis; pimeloyl-CoA from pimelate: step 1/1. Its function is as follows. Catalyzes the transformation of pimelate into pimeloyl-CoA with concomitant hydrolysis of ATP to AMP. The polypeptide is 6-carboxyhexanoate--CoA ligase (Aquifex aeolicus (strain VF5)).